A 122-amino-acid polypeptide reads, in one-letter code: Small ribosomal subunit protein uS13 (122 aa).

Positions 97 to 122 (PVRGQRTKTNARTRKGPARTVAGKKK) are disordered.

The protein belongs to the universal ribosomal protein uS13 family. As to quaternary structure, part of the 30S ribosomal subunit. Forms a loose heterodimer with protein S19. Forms two bridges to the 50S subunit in the 70S ribosome.

Its function is as follows. Located at the top of the head of the 30S subunit, it contacts several helices of the 16S rRNA. In the 70S ribosome it contacts the 23S rRNA (bridge B1a) and protein L5 of the 50S subunit (bridge B1b), connecting the 2 subunits; these bridges are implicated in subunit movement. Contacts the tRNAs in the A and P-sites. In Geobacter metallireducens (strain ATCC 53774 / DSM 7210 / GS-15), this protein is Small ribosomal subunit protein uS13.